A 193-amino-acid chain; its full sequence is NADPH:quinone oxidoreductase MdaB (193 aa).

Residues 16–23 (SNGQLNDT), 69–72 (GWWM), tyrosine 108, and 124–127 (TWNA) contribute to the FAD site.

It belongs to the oxidoreductase MdaB family. As to quaternary structure, homodimer. FAD is required as a cofactor.

Its subcellular location is the cytoplasm. It catalyses the reaction a quinone + NADPH + H(+) = a quinol + NADP(+). Functionally, NADPH-specific quinone reductase. The protein is NADPH:quinone oxidoreductase MdaB of Escherichia coli O157:H7.